Reading from the N-terminus, the 427-residue chain is UPF0597 protein CPF_0803 (427 aa).

Belongs to the UPF0597 family.

The protein is UPF0597 protein CPF_0803 of Clostridium perfringens (strain ATCC 13124 / DSM 756 / JCM 1290 / NCIMB 6125 / NCTC 8237 / Type A).